We begin with the raw amino-acid sequence, 620 residues long: Chaperone protein HscA homolog (620 aa).

The protein belongs to the heat shock protein 70 family.

Chaperone involved in the maturation of iron-sulfur cluster-containing proteins. Has a low intrinsic ATPase activity which is markedly stimulated by HscB. This Colwellia psychrerythraea (strain 34H / ATCC BAA-681) (Vibrio psychroerythus) protein is Chaperone protein HscA homolog.